We begin with the raw amino-acid sequence, 98 residues long: NADH-ubiquinone oxidoreductase chain 4L (98 aa).

3 helical membrane-spanning segments follow: residues 1–21 (MSLVHMNIALAFTVALLGLLM), 29–49 (SLLCLEGMMLTLFIMGTIMIL), and 61–81 (IILLVFAACEAAVGLSLLVMV).

It belongs to the complex I subunit 4L family. Core subunit of respiratory chain NADH dehydrogenase (Complex I) which is composed of 45 different subunits.

It localises to the mitochondrion inner membrane. It carries out the reaction a ubiquinone + NADH + 5 H(+)(in) = a ubiquinol + NAD(+) + 4 H(+)(out). Functionally, core subunit of the mitochondrial membrane respiratory chain NADH dehydrogenase (Complex I) which catalyzes electron transfer from NADH through the respiratory chain, using ubiquinone as an electron acceptor. Part of the enzyme membrane arm which is embedded in the lipid bilayer and involved in proton translocation. This is NADH-ubiquinone oxidoreductase chain 4L (MT-ND4L) from Sorex unguiculatus (Long-clawed shrew).